The following is a 416-amino-acid chain: tRNA(Met) cytidine acetate ligase (416 aa).

Residues Val7–His20, Gly101, Asn163, and Arg188 contribute to the ATP site.

Belongs to the TmcAL family.

The protein localises to the cytoplasm. It carries out the reaction cytidine(34) in elongator tRNA(Met) + acetate + ATP = N(4)-acetylcytidine(34) in elongator tRNA(Met) + AMP + diphosphate. Its function is as follows. Catalyzes the formation of N(4)-acetylcytidine (ac(4)C) at the wobble position of elongator tRNA(Met), using acetate and ATP as substrates. First activates an acetate ion to form acetyladenylate (Ac-AMP) and then transfers the acetyl group to tRNA to form ac(4)C34. This is tRNA(Met) cytidine acetate ligase from Bacillus licheniformis (strain ATCC 14580 / DSM 13 / JCM 2505 / CCUG 7422 / NBRC 12200 / NCIMB 9375 / NCTC 10341 / NRRL NRS-1264 / Gibson 46).